The following is a 102-amino-acid chain: Protein translation factor SUI1 homolog (102 aa).

It belongs to the SUI1 family.

The chain is Protein translation factor SUI1 homolog from Methanococcus vannielii.